Here is a 426-residue protein sequence, read N- to C-terminus: MAFQIPRGTQDLLPGETEKWQYVEQVARDLCRRYGYEEIRTPIFEHTELFLRGVGDTTDIVQKEMYTFEDKGGRALTLRPEGTAPVVRAFVEHKLYGSPNQPVKLYYAGPMFRYERPEAGRFRQFVQFGVEAIGSSDPAIDAEVMALAMHIYKALGLKHIRLVINSLGDVDSRRAHREALVRHFSDRIHELCPDCQARLETNPLRILDCKKDRDHELMASAPSILDYLNDESSAYFEKVKQYLTMLDIPFVIDSRLVRGLDYYNHTTFEIMSEAEGFGAAATLCGGGRYNGLVQEIGGPETPGIGFALSIERLLAALEAEGIELPIHRGIDCYVVAVGERAKDETVRLVYELRRAGLRVEQDYLGRKMKAQLKAADRLGASFVAIIGDEELEKQTAAVKHMASGEQTDVPLGELASFLIERTKREE.

Belongs to the class-II aminoacyl-tRNA synthetase family. In terms of assembly, homodimer.

Its subcellular location is the cytoplasm. The catalysed reaction is tRNA(His) + L-histidine + ATP = L-histidyl-tRNA(His) + AMP + diphosphate + H(+). In Geobacillus thermodenitrificans (strain NG80-2), this protein is Histidine--tRNA ligase.